A 575-amino-acid chain; its full sequence is MDIIAKLRDVSFDELHPNERLKVDSHYLYGTLEESLADRATGAVSDADTQLTKFHGFYQQDDRDLRDDRRHRKLEPLYSFMVRLRLPGGRVSPEQWLTLDDNARRYANGTLRITTRQTFQYHGVFKENLRGHLQALDKAMMDTIAACGDVNRNVICTANPHRSPIHRQVHDLAHEISAHLLPRTRAYHEIFLGEERVAGGPREAEDEVEPLYTRHYLPRKFKVALAIPPENDVDVFAHDVGFIADVQAGELKGFNVCIGGGMGMTHGEPATFPRLSDIVGYCTPDRVVAVAEAIMLVQRDNGNRHDRKQARLKYTVEALGVDGFRQEVEARLGEALSPARELTLTHNGDRLGWYQGEDGLWHYGLFVQNGRLADSDGGPQLMTGMREIAQAHDGDIVLTTNQNLIITQVPEARREVIDDLLDRYRMTVEATPLRRHAMACVAFPTCGLAMAESERYLPSLIDRLDAIMREAGLADDAIIVRMTGCPNGCARPYLAEIGFVGKTIGRYNLYLGGGFAGERLNKLYRENIDEATILEELTPLIRRYAVEREPGEAFGDFVVRTGIIAPTLAGREFHA.

Cys440, Cys446, Cys485, and Cys489 together coordinate [4Fe-4S] cluster. Cys489 contributes to the siroheme binding site.

The protein belongs to the nitrite and sulfite reductase 4Fe-4S domain family. As to quaternary structure, alpha(8)-beta(8). The alpha component is a flavoprotein, the beta component is a hemoprotein. Siroheme is required as a cofactor. The cofactor is [4Fe-4S] cluster.

The enzyme catalyses hydrogen sulfide + 3 NADP(+) + 3 H2O = sulfite + 3 NADPH + 4 H(+). It participates in sulfur metabolism; hydrogen sulfide biosynthesis; hydrogen sulfide from sulfite (NADPH route): step 1/1. Functionally, component of the sulfite reductase complex that catalyzes the 6-electron reduction of sulfite to sulfide. This is one of several activities required for the biosynthesis of L-cysteine from sulfate. This Chromohalobacter salexigens (strain ATCC BAA-138 / DSM 3043 / CIP 106854 / NCIMB 13768 / 1H11) protein is Sulfite reductase [NADPH] hemoprotein beta-component.